A 63-amino-acid polypeptide reads, in one-letter code: Large ribosomal subunit protein uL29 (63 aa).

It belongs to the universal ribosomal protein uL29 family.

This is Large ribosomal subunit protein uL29 from Aliarcobacter butzleri (strain RM4018) (Arcobacter butzleri).